The sequence spans 132 residues: uncharacterized protein (132 aa).

The helical transmembrane segment at 10–30 (LVLFFTIILIALCPFVYYLWD) threads the bilayer. Residues 50 to 79 (KNCSTEIEHAIEEHKRKNKEKKEAKEKRLA) are a coiled coil.

It is found in the membrane. This is an uncharacterized protein from Invertebrate iridescent virus 6 (IIV-6).